We begin with the raw amino-acid sequence, 104 residues long: MAAKIRKGDKVVVLTGRDKGRTGEVFEVRPDAGTALVRGINMVKRHQKQTQAQEGGIISKEAPIQLSNIAYVGKDGKPTRVGFKILADGKKVRIAKSSGAEIDG.

This sequence belongs to the universal ribosomal protein uL24 family. As to quaternary structure, part of the 50S ribosomal subunit.

Its function is as follows. One of two assembly initiator proteins, it binds directly to the 5'-end of the 23S rRNA, where it nucleates assembly of the 50S subunit. In terms of biological role, one of the proteins that surrounds the polypeptide exit tunnel on the outside of the subunit. In Bradyrhizobium diazoefficiens (strain JCM 10833 / BCRC 13528 / IAM 13628 / NBRC 14792 / USDA 110), this protein is Large ribosomal subunit protein uL24.